Reading from the N-terminus, the 676-residue chain is Symportin 1 (676 aa).

The segment covering 1-10 (MGKTRRNRVR) has biased composition (basic residues). The disordered stretch occupies residues 1–28 (MGKTRRNRVRNRTDPIAKPVKPPTDPEL). The ARM 1 repeat unit spans residues 183–216 (TILRLLFRLISADIAPQDIYEEAISCLTTLSEDN). The interval 325 to 385 (KGNQGSRESP…EDDEDDDDDS (61 aa)) is disordered. 2 stretches are compositionally biased toward acidic residues: residues 338 to 354 (ADEE…DAMD) and 363 to 385 (EDQE…DDDS). The ARM 2 repeat unit spans residues 420–453 (TAVPQLIRLSNLPIDSDESLTIQSHALSALNNIS).

Belongs to the nuclear import and ribosome assembly adapter family. Component of a hexameric 5S RNP precursor complex, composed of 5S RNA, RRS1, RPF2, RPL5, RPL11 and SYO1; this complex acts as a precursor for ribosome assembly.

Its function is as follows. Involved in ribosomal large subunit assembly. This Chaetomium thermophilum (strain DSM 1495 / CBS 144.50 / IMI 039719) (Thermochaetoides thermophila) protein is Symportin 1.